We begin with the raw amino-acid sequence, 173 residues long: Bilin biosynthesis protein PecF (173 aa).

Belongs to the CpcE/RpcE/PecE family.

Its function is as follows. An enzyme involved in the biosynthesis of bilin. This is Bilin biosynthesis protein PecF (pecF) from Nostoc sp. (strain PCC 7120 / SAG 25.82 / UTEX 2576).